The primary structure comprises 183 residues: Capsid protein (183 aa).

Residues Arg150–Cys183 are disordered. The segment covering Gln151 to Ser176 has biased composition (basic residues). Positions Arg158 to Arg175 match the Bipartite nuclear localization signal motif. Ser162 and Ser170 each carry phosphoserine; by host. A run of 2 repeats spans residues Ser162 to Gln169 and Ser170 to Gln177. Residues Ser162–Gln177 form a 2 X 8 AA repeats of S-P-R-R-R-[PR]-S-Q region. Residues Gln177–Cys183 form an RNA binding region.

Belongs to the orthohepadnavirus core antigen family. Homodimerizes, then multimerizes. Interacts with cytosol exposed regions of viral L glycoprotein present in the reticulum-to-Golgi compartment. Interacts with human FLNB. Phosphorylated form interacts with host importin alpha; this interaction depends on the exposure of the NLS, which itself depends upon genome maturation and/or phosphorylation of the capsid protein. Interacts with host NUP153. In terms of processing, phosphorylated by host SRPK1, SRPK2, and maybe protein kinase C or GAPDH. Phosphorylation is critical for pregenomic RNA packaging. Protein kinase C phosphorylation is stimulated by HBx protein and may play a role in transport of the viral genome to the nucleus at the late step during the viral replication cycle.

The protein resides in the virion. The protein localises to the host cytoplasm. In terms of biological role, self assembles to form an icosahedral capsid. Most capsids appear to be large particles with an icosahedral symmetry of T=4 and consist of 240 copies of capsid protein, though a fraction forms smaller T=3 particles consisting of 180 capsid proteins. Entering capsids are transported along microtubules to the nucleus. Phosphorylation of the capsid is thought to induce exposure of nuclear localization signal in the C-terminal portion of the capsid protein that allows binding to the nuclear pore complex via the importin (karyopherin-) alpha and beta. Capsids are imported in intact form through the nuclear pore into the nuclear basket, where it probably binds NUP153. Only capsids that contain the mature viral genome can release the viral DNA and capsid protein into the nucleoplasm. Immature capsids get stuck in the basket. Capsids encapsulate the pre-genomic RNA and the P protein. Pre-genomic RNA is reverse-transcribed into DNA while the capsid is still in the cytoplasm. The capsid can then either be directed to the nucleus, providing more genomes for transcription, or bud through the endoplasmic reticulum to provide new virions. The sequence is that of Capsid protein from Homo sapiens (Human).